A 310-amino-acid polypeptide reads, in one-letter code: ER-derived vesicles protein ERV29 (310 aa).

Residues 1 to 108 lie on the Cytoplasmic side of the membrane; the sequence is MSYRGPIGNF…YLNKWKHYPY (108 aa). The segment at 11–31 is disordered; the sequence is GGMPMSSSQGPYSGGAQFRSN. A helical membrane pass occupies residues 109 to 129; the sequence is FFVVVFLVVVTVSMLIGASLL. Residues 130-137 are Lumenal-facing; the sequence is VLRKQTNY. A helical transmembrane segment spans residues 138-158; the sequence is ATGVLCACVISQALVYGLFTG. Over 159-209 the chain is Cytoplasmic; it reads SSFVLRNFSVIGGLLIAFSDSIVQNKTTFGMLPELNSKNDKAKGYLLFAGR. The chain crosses the membrane as a helical span at residues 210 to 230; the sequence is ILIVLMFIAFTFSKSWFTVVL. Residues 231-245 are Lumenal-facing; sequence TIIGTICFAIGYKTK. Residues 246–266 form a helical membrane-spanning segment; sequence FASIMLGLILTFYNITLNNYW. Topologically, residues 267–310 are cytoplasmic; that stretch reads FYNNTKRDFLKYEFYQNLSIIGGLLLVTNTGAGELSVDEKKKIY. A Di-lysine motif motif is present at residues 307-310; the sequence is KKIY.

Belongs to the SURF4 family.

The protein resides in the endoplasmic reticulum membrane. In terms of biological role, constituent of COPII-coated endoplasmic reticulum-derived transport vesicles. Required for efficient transport of a subset of secretory proteins to the Golgi. The C-terminal di-lysine motif is required for exit from the endoplasmic reticulum. Required directly for packaging glycosylated pro-alpha-factor into COPII vesicles. Facilitates retrograde transport from the Golgi to the endoplasmic reticulum. This is ER-derived vesicles protein ERV29 (ERV29) from Saccharomyces cerevisiae (strain ATCC 204508 / S288c) (Baker's yeast).